Consider the following 245-residue polypeptide: Probable octanoyltransferase 2 (245 aa).

The BPL/LPL catalytic domain occupies 38–227 (MEYKPVLYFQ…SIEKEFDIKE (190 aa)). Substrate is bound by residues 89 to 96 (RGGYETYH), 157 to 159 (SIG), and 170 to 172 (GMA). The Acyl-thioester intermediate role is filled by C188.

It belongs to the LipB family.

The protein resides in the cytoplasm. The enzyme catalyses octanoyl-[ACP] + L-lysyl-[protein] = N(6)-octanoyl-L-lysyl-[protein] + holo-[ACP] + H(+). The protein operates within protein modification; protein lipoylation via endogenous pathway; protein N(6)-(lipoyl)lysine from octanoyl-[acyl-carrier-protein]: step 1/2. In terms of biological role, catalyzes the transfer of endogenously produced octanoic acid from octanoyl-acyl-carrier-protein onto the lipoyl domains of lipoate-dependent enzymes. Lipoyl-ACP can also act as a substrate although octanoyl-ACP is likely to be the physiological substrate. This chain is Probable octanoyltransferase 2, found in Picrophilus torridus (strain ATCC 700027 / DSM 9790 / JCM 10055 / NBRC 100828 / KAW 2/3).